A 68-amino-acid chain; its full sequence is UPF0253 protein AHA_2115 (68 aa).

The protein belongs to the UPF0253 family.

The polypeptide is UPF0253 protein AHA_2115 (Aeromonas hydrophila subsp. hydrophila (strain ATCC 7966 / DSM 30187 / BCRC 13018 / CCUG 14551 / JCM 1027 / KCTC 2358 / NCIMB 9240 / NCTC 8049)).